The following is a 64-amino-acid chain: DNA-binding protein 7d (64 aa).

N6-methyllysine occurs at positions 5, 7, 61, 63, and 64.

It belongs to the 7 kDa DNA-binding/endoribonuclease P2 family. In terms of assembly, monomer.

The protein localises to the cytoplasm. Can constrain negative DNA supercoils. May be involved in maintaining the integrity of the genome at high temperature. Stimulates the Holliday junction cleavage activity of Hjc. The sequence is that of DNA-binding protein 7d (sso7d) from Saccharolobus solfataricus (strain ATCC 35092 / DSM 1617 / JCM 11322 / P2) (Sulfolobus solfataricus).